We begin with the raw amino-acid sequence, 498 residues long: ATP synthase subunit beta, chloroplastic (498 aa).

ATP is bound at residue 172-179; sequence GGAGVGKT.

The protein belongs to the ATPase alpha/beta chains family. As to quaternary structure, F-type ATPases have 2 components, CF(1) - the catalytic core - and CF(0) - the membrane proton channel. CF(1) has five subunits: alpha(3), beta(3), gamma(1), delta(1), epsilon(1). CF(0) has four main subunits: a(1), b(1), b'(1) and c(9-12).

The protein localises to the plastid. Its subcellular location is the chloroplast thylakoid membrane. It catalyses the reaction ATP + H2O + 4 H(+)(in) = ADP + phosphate + 5 H(+)(out). Its function is as follows. Produces ATP from ADP in the presence of a proton gradient across the membrane. The catalytic sites are hosted primarily by the beta subunits. In Aspidistra elatior (Cast-iron plant), this protein is ATP synthase subunit beta, chloroplastic.